The following is a 601-amino-acid chain: DNA replication licensing factor MCM3 (601 aa).

An MCM domain is found at 180–386 (PINLLSKSIA…LDRRLSQHVL (207 aa)). An ATP-binding site is contributed by 229-236 (GDPSTAKS). The Arginine finger motif lies at 361-364 (SRFD).

This sequence belongs to the MCM family. In terms of assembly, component of the MCM2-7 complex.

It is found in the nucleus. The protein localises to the chromosome. It localises to the nucleoplasm. It catalyses the reaction ATP + H2O = ADP + phosphate + H(+). In terms of biological role, acts as a component of the MCM2-7 complex (MCM complex) which is the replicative helicase essential for DNA replication initiation and elongation in eukaryotic cells. Required for DNA replication and cell proliferation. The active ATPase sites in the MCM2-7 ring are formed through the interaction surfaces of two neighboring subunits such that a critical structure of a conserved arginine finger motif is provided in trans relative to the ATP-binding site of the Walker A box of the adjacent subunit. This Entamoeba histolytica (strain ATCC 30459 / HM-1:IMSS / ABRM) protein is DNA replication licensing factor MCM3.